The sequence spans 218 residues: Ribulose-phosphate 3-epimerase (218 aa).

Ser-10 lines the substrate pocket. The a divalent metal cation site is built by His-35, Asp-37, and His-68. Asp-37 (proton acceptor) is an active-site residue. Substrate contacts are provided by residues His-68, 144–147, 177–179, and 199–200; these read GFSG, DGG, and GS. Asp-177 lines the a divalent metal cation pocket. Catalysis depends on Asp-177, which acts as the Proton donor.

This sequence belongs to the ribulose-phosphate 3-epimerase family. A divalent metal cation serves as cofactor.

The catalysed reaction is D-ribulose 5-phosphate = D-xylulose 5-phosphate. The protein operates within carbohydrate degradation. Its function is as follows. Catalyzes the reversible epimerization of D-ribulose 5-phosphate to D-xylulose 5-phosphate. This is Ribulose-phosphate 3-epimerase from Treponema pallidum (strain Nichols).